Consider the following 396-residue polypeptide: Probable sugar efflux transporter (396 aa).

12 consecutive transmembrane segments (helical) span residues 15-35, 50-70, 81-101, 103-123, 136-156, 169-189, 209-229, 246-266, 275-295, 301-321, 333-353, and 364-384; these read VVTLAIAAFIFNTTEFVPVGL, VGIMLTIYAWVVAVMSLPFML, LICLFVLFIASHVLSFLAWNF, VLVISRIGIAFAHAIFWSITA, AQALSLIATGTALAMVLGLPI, TFFAIGMGALITLLCLIKLLP, PALMSLYVLTVVVVTAHYTAY, FATVLLLILGGAGIIGSLVFG, SLVSIAIALLVICLLLLLPAA, LAILSIFWGIAIMVIGLGMQV, VAMALFSGIFNIGIGAGALVG, and AIGYIGAIPACAALVWAVLIF.

Belongs to the major facilitator superfamily. SotB (TC 2.A.1.2) family.

The protein resides in the cell inner membrane. Functionally, involved in the efflux of sugars. The physiological role may be the reduction of the intracellular concentration of toxic sugars or sugar metabolites. In Salmonella schwarzengrund (strain CVM19633), this protein is Probable sugar efflux transporter.